The sequence spans 131 residues: Small ribosomal subunit protein uS11 (131 aa).

It belongs to the universal ribosomal protein uS11 family. In terms of assembly, part of the 30S ribosomal subunit. Interacts with proteins S7 and S18. Binds to IF-3.

Located on the platform of the 30S subunit, it bridges several disparate RNA helices of the 16S rRNA. Forms part of the Shine-Dalgarno cleft in the 70S ribosome. The protein is Small ribosomal subunit protein uS11 of Clostridium acetobutylicum (strain ATCC 824 / DSM 792 / JCM 1419 / IAM 19013 / LMG 5710 / NBRC 13948 / NRRL B-527 / VKM B-1787 / 2291 / W).